The sequence spans 311 residues: Oxygen-dependent coproporphyrinogen-III oxidase (311 aa).

Ser100 provides a ligand contact to substrate. 2 residues coordinate a divalent metal cation: His104 and His114. His114 acts as the Proton donor in catalysis. Residue 116–118 (NVR) coordinates substrate. A divalent metal cation is bound by residues His153 and His183. The segment at 248 to 283 (YAEFNLVYDRGTLFGLQSGGRTESILMSLPPIVHWE) is important for dimerization. 266–268 (GGR) serves as a coordination point for substrate.

This sequence belongs to the aerobic coproporphyrinogen-III oxidase family. In terms of assembly, homodimer. A divalent metal cation serves as cofactor.

It localises to the cytoplasm. The catalysed reaction is coproporphyrinogen III + O2 + 2 H(+) = protoporphyrinogen IX + 2 CO2 + 2 H2O. It participates in porphyrin-containing compound metabolism; protoporphyrin-IX biosynthesis; protoporphyrinogen-IX from coproporphyrinogen-III (O2 route): step 1/1. Functionally, involved in the heme biosynthesis. Catalyzes the aerobic oxidative decarboxylation of propionate groups of rings A and B of coproporphyrinogen-III to yield the vinyl groups in protoporphyrinogen-IX. In Legionella pneumophila (strain Corby), this protein is Oxygen-dependent coproporphyrinogen-III oxidase.